Consider the following 212-residue polypeptide: Thymidylate kinase (212 aa).

10–17 (GLEGAGKT) contributes to the ATP binding site.

It belongs to the thymidylate kinase family.

The catalysed reaction is dTMP + ATP = dTDP + ADP. In terms of biological role, phosphorylation of dTMP to form dTDP in both de novo and salvage pathways of dTTP synthesis. The chain is Thymidylate kinase from Yersinia pseudotuberculosis serotype O:3 (strain YPIII).